The primary structure comprises 153 residues: Transcriptional repressor NrdR (153 aa).

Residues 3–34 (CPSCSHNGTRVLDSRPVDEGRSIRRRRECESC) fold into a zinc finger. An ATP-cone domain is found at 49 to 139 (LIVVKKEGTR…VYRQFKDLNV (91 aa)).

The protein belongs to the NrdR family. Requires Zn(2+) as cofactor.

In terms of biological role, negatively regulates transcription of bacterial ribonucleotide reductase nrd genes and operons by binding to NrdR-boxes. This chain is Transcriptional repressor NrdR, found in Bacillus anthracis (strain A0248).